The sequence spans 348 residues: Holliday junction branch migration complex subunit RuvB (348 aa).

The segment covering 1–10 (MAIVSSSSGR) has biased composition (low complexity). The interval 1–37 (MAIVSSSSGRKPPRRPEALMDPQQAPEEVVSRPEDKL) is disordered. Residues 13–198 (PRRPEALMDP…FGLIQRLEFY (186 aa)) form a large ATPase domain (RuvB-L) region. The ATP site is built by Leu37, Arg38, Gly79, Lys82, Thr83, Thr84, Arg188, Tyr198, and Arg235. Thr83 contacts Mg(2+). The interval 199 to 271 (GQGDLEAIVE…LVGEALSLHR (73 aa)) is small ATPAse domain (RuvB-S). The head domain (RuvB-H) stretch occupies residues 274 to 348 (HRGLDASDRR…AARSHLAEAA (75 aa)). 2 residues coordinate DNA: Arg329 and Arg334.

The protein belongs to the RuvB family. Homohexamer. Forms an RuvA(8)-RuvB(12)-Holliday junction (HJ) complex. HJ DNA is sandwiched between 2 RuvA tetramers; dsDNA enters through RuvA and exits via RuvB. An RuvB hexamer assembles on each DNA strand where it exits the tetramer. Each RuvB hexamer is contacted by two RuvA subunits (via domain III) on 2 adjacent RuvB subunits; this complex drives branch migration. In the full resolvosome a probable DNA-RuvA(4)-RuvB(12)-RuvC(2) complex forms which resolves the HJ.

It localises to the cytoplasm. The enzyme catalyses ATP + H2O = ADP + phosphate + H(+). The RuvA-RuvB-RuvC complex processes Holliday junction (HJ) DNA during genetic recombination and DNA repair, while the RuvA-RuvB complex plays an important role in the rescue of blocked DNA replication forks via replication fork reversal (RFR). RuvA specifically binds to HJ cruciform DNA, conferring on it an open structure. The RuvB hexamer acts as an ATP-dependent pump, pulling dsDNA into and through the RuvAB complex. RuvB forms 2 homohexamers on either side of HJ DNA bound by 1 or 2 RuvA tetramers; 4 subunits per hexamer contact DNA at a time. Coordinated motions by a converter formed by DNA-disengaged RuvB subunits stimulates ATP hydrolysis and nucleotide exchange. Immobilization of the converter enables RuvB to convert the ATP-contained energy into a lever motion, pulling 2 nucleotides of DNA out of the RuvA tetramer per ATP hydrolyzed, thus driving DNA branch migration. The RuvB motors rotate together with the DNA substrate, which together with the progressing nucleotide cycle form the mechanistic basis for DNA recombination by continuous HJ branch migration. Branch migration allows RuvC to scan DNA until it finds its consensus sequence, where it cleaves and resolves cruciform DNA. The sequence is that of Holliday junction branch migration complex subunit RuvB from Synechococcus sp. (strain CC9605).